Here is a 144-residue protein sequence, read N- to C-terminus: Interleukin-9 (144 aa).

The signal sequence occupies residues 1 to 18 (MLVTYILASVLLFSSVLG). Q19 is subject to Pyrrolidone carboxylic acid. N-linked (GlcNAc...) asparagine glycosylation is found at N50, N78, N101, and N114.

The protein belongs to the IL-7/IL-9 family. In terms of assembly, interacts with IL9R. Interacts with IL2RG.

The protein localises to the secreted. In terms of biological role, multifunctional cytokine secreted mainly by T-helper 2 lymphocytes and also mast cells or NKT cells that plays important roles in the immune response against parasites. Affects intestinal epithelial permeability and adaptive immunity. In addition, induces the differentiation of specific T-cell subsets such as IL-17 producing helper T-cells (TH17) and also proliferation and differentiation of mast cells. Mechanistically, exerts its biological effects through a receptor composed of IL9R subunit and a signal transducing subunit IL2RG. Receptor stimulation results in the rapid activation of JAK1 and JAK3 kinase activities leading to STAT1, STAT3 and STAT5-mediated transcriptional programs. Induction of differentiation genes seems to be mediated by STAT1 alone, while protection of cells from apoptosis depends on STAT3 and STAT5. The sequence is that of Interleukin-9 (Il9) from Mus musculus (Mouse).